Reading from the N-terminus, the 316-residue chain is Ribosomal RNA small subunit methyltransferase H (316 aa).

S-adenosyl-L-methionine is bound by residues 35–37, D55, F84, D105, and Q112; that span reads AGH.

This sequence belongs to the methyltransferase superfamily. RsmH family.

Its subcellular location is the cytoplasm. The enzyme catalyses cytidine(1402) in 16S rRNA + S-adenosyl-L-methionine = N(4)-methylcytidine(1402) in 16S rRNA + S-adenosyl-L-homocysteine + H(+). In terms of biological role, specifically methylates the N4 position of cytidine in position 1402 (C1402) of 16S rRNA. This chain is Ribosomal RNA small subunit methyltransferase H, found in Streptococcus uberis (strain ATCC BAA-854 / 0140J).